The chain runs to 573 residues: Proline--tRNA ligase (573 aa).

Belongs to the class-II aminoacyl-tRNA synthetase family. ProS type 1 subfamily. In terms of assembly, homodimer.

Its subcellular location is the cytoplasm. The enzyme catalyses tRNA(Pro) + L-proline + ATP = L-prolyl-tRNA(Pro) + AMP + diphosphate. In terms of biological role, catalyzes the attachment of proline to tRNA(Pro) in a two-step reaction: proline is first activated by ATP to form Pro-AMP and then transferred to the acceptor end of tRNA(Pro). As ProRS can inadvertently accommodate and process non-cognate amino acids such as alanine and cysteine, to avoid such errors it has two additional distinct editing activities against alanine. One activity is designated as 'pretransfer' editing and involves the tRNA(Pro)-independent hydrolysis of activated Ala-AMP. The other activity is designated 'posttransfer' editing and involves deacylation of mischarged Ala-tRNA(Pro). The misacylated Cys-tRNA(Pro) is not edited by ProRS. This chain is Proline--tRNA ligase, found in Caldanaerobacter subterraneus subsp. tengcongensis (strain DSM 15242 / JCM 11007 / NBRC 100824 / MB4) (Thermoanaerobacter tengcongensis).